Consider the following 442-residue polypeptide: Ribosomal protein uS12 methylthiotransferase RimO (442 aa).

The region spanning 13–129 is the MTTase N-terminal domain; that stretch reads RSIFLLSLGC…ILNILGTAYD (117 aa). Positions 22, 58, 92, 153, 157, and 160 each coordinate [4Fe-4S] cluster. In terms of domain architecture, Radical SAM core spans 139–369; sequence LSPSHYAWLK…MELQEGISEK (231 aa). Residues 372 to 439 form the TRAM domain; sequence RALEEKALKV…AYELVGRIKN (68 aa).

The protein belongs to the methylthiotransferase family. RimO subfamily. [4Fe-4S] cluster is required as a cofactor.

Its subcellular location is the cytoplasm. The enzyme catalyses L-aspartate(89)-[ribosomal protein uS12]-hydrogen + (sulfur carrier)-SH + AH2 + 2 S-adenosyl-L-methionine = 3-methylsulfanyl-L-aspartate(89)-[ribosomal protein uS12]-hydrogen + (sulfur carrier)-H + 5'-deoxyadenosine + L-methionine + A + S-adenosyl-L-homocysteine + 2 H(+). Catalyzes the methylthiolation of an aspartic acid residue of ribosomal protein uS12. The protein is Ribosomal protein uS12 methylthiotransferase RimO of Chlorobium phaeobacteroides (strain BS1).